Here is a 291-residue protein sequence, read N- to C-terminus: Verruculogen synthase (291 aa).

The active site involves Tyr68.

It belongs to the PhyH family. As to quaternary structure, homodimer. Fe cation serves as cofactor.

The enzyme catalyses fumitremorgin B + 2-oxoglutarate + AH2 + 2 O2 = verruculogen + succinate + A + CO2 + H2O. It participates in mycotoxin biosynthesis. In terms of biological role, verruculogen synthase; part of the gene cluster that mediates the biosynthesis of fumitremorgins, indole alkaloids that carry not only intriguing chemical structures, but also interesting biological and pharmacological activities. The biosynthesis of fumitremorgin-type alkaloids begins by condensation of the two amino acids L-tryptophan and L-proline to brevianamide F, catalyzed by the non-ribosomal peptide synthetase ftmA. Brevianamide F is then prenylated by the prenyltransferase ftmPT1/ftmB in the presence of dimethylallyl diphosphate, resulting in the formation of tryprostatin B. The three cytochrome P450 monooxygenases, ftmP450-1/ftmC, ftmP450-2/ftmE and ftmP450-3/FtmG, are responsible for the conversion of tryprostatin B to 6-hydroxytryprostatin B, tryprostatin A to fumitremorgin C and fumitremorgin C to 12,13-dihydroxyfumitremorgin C, respectively. The putative methyltransferase ftmMT/ftmD is expected for the conversion of 6-hydroxytryprostatin B to tryprostatin A. FtmPT2/FtmH catalyzes the prenylation of 12,13-dihydroxyfumitre-morgin C in the presence of dimethylallyl diphosphate, resulting in the formation of fumitremorgin B. Fumitremorgin B is further converted to verruculogen by ftmOx1/ftmF via the insertion of an endoperoxide bond between the two prenyl moieties. In some fungal species, verruculogen is further converted to fumitremorgin A, but the enzymes involved in this step have not been identified yet. The protein is Verruculogen synthase of Aspergillus fumigatus (strain ATCC MYA-4609 / CBS 101355 / FGSC A1100 / Af293) (Neosartorya fumigata).